The following is a 1509-amino-acid chain: Putative endo-alpha-N-acetylgalactosaminidase (1509 aa).

The N-terminal stretch at 1–41 is a signal peptide; that stretch reads MPFRGRRRQSALRGLSLAATFCLAAGSSGISGALFATPAQA. Ca(2+) is bound by residues aspartate 288, asparagine 290, aspartate 292, lysine 294, and aspartate 299. Positions 313–585 are catalytic; that stretch reads GGDDVKNRVV…NLPVKFLQQQ (273 aa). Aspartate 369 lines the substrate pocket. The Nucleophile role is filled by aspartate 472. Glutamate 498 functions as the Proton donor/acceptor in the catalytic mechanism. Ca(2+) contacts are provided by asparagine 878, glutamate 880, aspartate 926, and tyrosine 929. Disordered regions lie at residues 1176 to 1197 and 1403 to 1439; these read NGWGPVEKDQANGEQAQGDGPP and IKAANPNPGTGSNPGTGSNPGTDPGTGSAGGNSSGGG. The span at 1407-1428 shows a compositional bias: low complexity; sequence NPNPGTGSNPGTGSNPGTDPGT. Over residues 1429-1439 the composition is skewed to gly residues; the sequence is GSAGGNSSGGG. The LPXTG sorting signal motif lies at 1475–1479; the sequence is LAETG. Threonine 1478 carries the post-translational modification Pentaglycyl murein peptidoglycan amidated threonine. Residues 1479-1509 constitute a propeptide, removed by sortase; it reads GFSGLVLPLGIGLMLLLIGAAAIIVRRHRHS.

Belongs to the glycosyl hydrolase 101 family. A subfamily.

It localises to the secreted. It is found in the cell wall. The enzyme catalyses a 3-O-[beta-D-galactosyl-(1-&gt;3)-N-acetyl-alpha-D-galactosaminyl]-L-threonyl-[protein] + H2O = beta-D-galactosyl-(1-&gt;3)-N-acetyl-D-galactosamine + L-threonyl-[protein]. The catalysed reaction is a 3-O-[beta-D-galactosyl-(1-&gt;3)-N-acetyl-alpha-D-galactosaminyl]-L-seryl-[protein] + H2O = beta-D-galactosyl-(1-&gt;3)-N-acetyl-D-galactosamine + L-seryl-[protein]. Functionally, probably involved in the breakdown of mucin-type O-linked glycans. Specifically removes the T-antigen disaccharide (Gal-beta-1,3-GalNAc-alpha) from extracellular host glycoproteins. This chain is Putative endo-alpha-N-acetylgalactosaminidase, found in Renibacterium salmoninarum (strain ATCC 33209 / DSM 20767 / JCM 11484 / NBRC 15589 / NCIMB 2235).